A 161-amino-acid chain; its full sequence is Cyclic pyranopterin monophosphate synthase (161 aa).

Substrate-binding positions include 75–77 (MCH) and 115–116 (ME). Asp-130 is an active-site residue.

Belongs to the MoaC family. Homohexamer; trimer of dimers.

The enzyme catalyses (8S)-3',8-cyclo-7,8-dihydroguanosine 5'-triphosphate = cyclic pyranopterin phosphate + diphosphate. Its pathway is cofactor biosynthesis; molybdopterin biosynthesis. In terms of biological role, catalyzes the conversion of (8S)-3',8-cyclo-7,8-dihydroguanosine 5'-triphosphate to cyclic pyranopterin monophosphate (cPMP). This Bacillus mycoides (strain KBAB4) (Bacillus weihenstephanensis) protein is Cyclic pyranopterin monophosphate synthase.